Consider the following 284-residue polypeptide: Proteasome subunit beta 1 (284 aa).

A propeptide spans methionine 1–alanine 56 (removed in mature form; by autocatalysis). Residue threonine 57 is the Nucleophile of the active site.

It belongs to the peptidase T1B family. In terms of assembly, the 20S proteasome core is composed of 14 alpha and 14 beta subunits that assemble into four stacked heptameric rings, resulting in a barrel-shaped structure. The two inner rings, each composed of seven catalytic beta subunits, are sandwiched by two outer rings, each composed of seven alpha subunits. The catalytic chamber with the active sites is on the inside of the barrel. Has a gated structure, the ends of the cylinder being occluded by the N-termini of the alpha-subunits. Is capped by the proteasome-associated ATPase, ARC.

It is found in the cytoplasm. The catalysed reaction is Cleavage of peptide bonds with very broad specificity.. The protein operates within protein degradation; proteasomal Pup-dependent pathway. Its activity is regulated as follows. The formation of the proteasomal ATPase ARC-20S proteasome complex, likely via the docking of the C-termini of ARC into the intersubunit pockets in the alpha-rings, may trigger opening of the gate for substrate entry. Interconversion between the open-gate and close-gate conformations leads to a dynamic regulation of the 20S proteasome proteolysis activity. Component of the proteasome core, a large protease complex with broad specificity involved in protein degradation. This chain is Proteasome subunit beta 1, found in Thermomonospora curvata (strain ATCC 19995 / DSM 43183 / JCM 3096 / KCTC 9072 / NBRC 15933 / NCIMB 10081 / Henssen B9).